We begin with the raw amino-acid sequence, 463 residues long: Soluble pyridine nucleotide transhydrogenase (463 aa).

An FAD-binding site is contributed by 35 to 44 (EDKPTVGGNC).

The protein belongs to the class-I pyridine nucleotide-disulfide oxidoreductase family. The cofactor is FAD.

It localises to the cytoplasm. The catalysed reaction is NAD(+) + NADPH = NADH + NADP(+). In terms of biological role, conversion of NADPH, generated by peripheral catabolic pathways, to NADH, which can enter the respiratory chain for energy generation. This chain is Soluble pyridine nucleotide transhydrogenase, found in Marinobacter nauticus (strain ATCC 700491 / DSM 11845 / VT8) (Marinobacter aquaeolei).